The following is a 76-amino-acid chain: Conopeptide X11.1 (76 aa).

Positions 1-20 (MMKLSVSFLLLLMLLPFITG) are cleaved as a signal peptide. The propeptide occupies 21–39 (EENSDSDVLKSGAAVRQGR). 4 disulfide bridges follow: Cys-42–Cys-56, Cys-49–Cys-61, Cys-55–Cys-66, and Cys-60–Cys-73.

As to expression, expressed by the venom duct.

Its subcellular location is the secreted. Its function is as follows. Antimicrobial peptide that potently inhibits growth of Mycobacterium tuberculosis (H37Rv strain) (MIC=3 uM). The sequence is that of Conopeptide X11.1 from Conasprella ximenes (Interrupted cone).